A 57-amino-acid chain; its full sequence is U17-myrmicitoxin-Tb1a (57 aa).

An N-terminal signal peptide occupies residues 1 to 29; sequence MEKNRTNIFSVYLMITFLLISIFITMVMS. The propeptide occupies 30–33; it reads DGEA. An intrachain disulfide couples cysteine 42 to cysteine 53. Alanine 56 is subject to Alanine amide.

In terms of processing, O-glycosylated. Expressed by the venom gland.

The protein resides in the secreted. Its function is as follows. Serine protease inhibitor which exhibits antifibrinolytic, antielastolytic and antimicrobial activities. Displays antimicrobial activity against bacteria and fungi. Likely functions in the innate immune response to microbial infection and possibly in the venom, as an antifibrinolytic agent. The chain is U17-myrmicitoxin-Tb1a from Tetramorium bicarinatum (Tramp ant).